The following is a 766-amino-acid chain: Protein zer-1 homolog (766 aa).

A2 is subject to N-acetylalanine. 3 LRR repeats span residues 226–245 (SLVL…IVQL), 246–268 (HKLR…KLTR), and 278–302 (LGNL…KMEE). ARM repeat units lie at residues 427–467 (RSEQ…NFSI), 511–556 (DNDH…NITD), 558–600 (TPDN…NVAE), 602–643 (KELR…HIMF), and 714–756 (PDKY…HCSN).

The protein belongs to the zyg-11 family. Interacts with the ELOC-ELOB/Elongin BC complex. Part of an E3 ubiquitin ligase complex including ZER1, CUL2 and Elongin BC. As to expression, expressed in testis, spermatocytes and spermatids (at protein level). Expressed in spermatocytes, spermatids, prostate, skeletal muscle, ovary, small intestine, heart, brain and pancreas.

Functionally, serves as substrate adapter subunit in the E3 ubiquitin ligase complex ZYG11B-CUL2-Elongin BC. Acts to target substrates bearing N-terminal degrons for proteasomal degradation with the first four residues of substrates being the key recognition elements. Involved in the clearance of proteolytic fragments generated by caspase cleavage during apoptosis since N-terminal glycine degrons are strongly enriched at caspase cleavage sites. Also important in the quality control of protein N-myristoylation in which N-terminal glycine degrons are conditionally exposed after a failure of N-myristoylation. The polypeptide is Protein zer-1 homolog (Homo sapiens (Human)).